The primary structure comprises 490 residues: Betaine aldehyde dehydrogenase (490 aa).

The K(+) site is built by T26, I27, and D93. 150–152 serves as a coordination point for NAD(+); that stretch reads GAW. The active-site Charge relay system is the K162. 176-179 contributes to the NAD(+) binding site; that stretch reads KPSE. V180 serves as a coordination point for K(+). An NAD(+)-binding site is contributed by 230 to 233; that stretch reads GVAS. A K(+)-binding site is contributed by L246. Catalysis depends on E252, which acts as the Proton acceptor. Positions 254, 286, and 387 each coordinate NAD(+). Residue C286 is the Nucleophile of the active site. C286 is subject to Cysteine sulfenic acid (-SOH). The K(+) site is built by K457 and G460. The active-site Charge relay system is E464.

This sequence belongs to the aldehyde dehydrogenase family. Dimer of dimers. It depends on K(+) as a cofactor.

It catalyses the reaction betaine aldehyde + NAD(+) + H2O = glycine betaine + NADH + 2 H(+). Its pathway is amine and polyamine biosynthesis; betaine biosynthesis via choline pathway; betaine from betaine aldehyde: step 1/1. Involved in the biosynthesis of the osmoprotectant glycine betaine. Catalyzes the irreversible oxidation of betaine aldehyde to the corresponding acid. The sequence is that of Betaine aldehyde dehydrogenase from Escherichia coli (strain SE11).